Here is a 426-residue protein sequence, read N- to C-terminus: Serine--tRNA ligase (426 aa).

Basic and acidic residues predominate over residues 1–15; that stretch reads MIDVKDLSENPDKFR. The disordered stretch occupies residues 1–22; that stretch reads MIDVKDLSENPDKFRASQRARG. An L-serine-binding site is contributed by 228-230; the sequence is TSE. ATP contacts are provided by residues 259 to 261 and Val-275; that span reads RRE. Glu-282 serves as a coordination point for L-serine. 346-349 provides a ligand contact to ATP; sequence ELTS. Thr-386 provides a ligand contact to L-serine.

It belongs to the class-II aminoacyl-tRNA synthetase family. Type-1 seryl-tRNA synthetase subfamily. Homodimer. The tRNA molecule binds across the dimer.

It localises to the cytoplasm. It catalyses the reaction tRNA(Ser) + L-serine + ATP = L-seryl-tRNA(Ser) + AMP + diphosphate + H(+). The catalysed reaction is tRNA(Sec) + L-serine + ATP = L-seryl-tRNA(Sec) + AMP + diphosphate + H(+). It functions in the pathway aminoacyl-tRNA biosynthesis; selenocysteinyl-tRNA(Sec) biosynthesis; L-seryl-tRNA(Sec) from L-serine and tRNA(Sec): step 1/1. Its function is as follows. Catalyzes the attachment of serine to tRNA(Ser). Is also able to aminoacylate tRNA(Sec) with serine, to form the misacylated tRNA L-seryl-tRNA(Sec), which will be further converted into selenocysteinyl-tRNA(Sec). The chain is Serine--tRNA ligase from Pseudarthrobacter chlorophenolicus (strain ATCC 700700 / DSM 12829 / CIP 107037 / JCM 12360 / KCTC 9906 / NCIMB 13794 / A6) (Arthrobacter chlorophenolicus).